Reading from the N-terminus, the 368-residue chain is Chaperone protein DnaJ (368 aa).

Residues 5–69 (DYYEVLGVAR…NQRARYDQFG (65 aa)) enclose the J domain. A CR-type zinc finger spans residues 125-207 (GVEKVITIPV…CRGAGRVRKN (83 aa)). Zn(2+)-binding residues include C138, C141, C155, C158, C181, C184, C195, and C198. CXXCXGXG motif repeat units follow at residues 138–145 (CGTCHGSG), 155–162 (CKRCGGSG), 181–188 (CSTCHGRG), and 195–202 (CETCRGAG).

It belongs to the DnaJ family. In terms of assembly, homodimer. The cofactor is Zn(2+).

It localises to the cytoplasm. In terms of biological role, participates actively in the response to hyperosmotic and heat shock by preventing the aggregation of stress-denatured proteins and by disaggregating proteins, also in an autonomous, DnaK-independent fashion. Unfolded proteins bind initially to DnaJ; upon interaction with the DnaJ-bound protein, DnaK hydrolyzes its bound ATP, resulting in the formation of a stable complex. GrpE releases ADP from DnaK; ATP binding to DnaK triggers the release of the substrate protein, thus completing the reaction cycle. Several rounds of ATP-dependent interactions between DnaJ, DnaK and GrpE are required for fully efficient folding. Also involved, together with DnaK and GrpE, in the DNA replication of plasmids through activation of initiation proteins. This chain is Chaperone protein DnaJ, found in Exiguobacterium sibiricum (strain DSM 17290 / CCUG 55495 / CIP 109462 / JCM 13490 / 255-15).